We begin with the raw amino-acid sequence, 396 residues long: Ribosomal RNA large subunit methyltransferase I (396 aa).

The PUA domain maps to 2 to 81 (TVSIYLAKGR…EAIDKDFFVR (80 aa)).

Belongs to the methyltransferase superfamily. RlmI family.

Its subcellular location is the cytoplasm. It catalyses the reaction cytidine(1962) in 23S rRNA + S-adenosyl-L-methionine = 5-methylcytidine(1962) in 23S rRNA + S-adenosyl-L-homocysteine + H(+). Its function is as follows. Specifically methylates the cytosine at position 1962 (m5C1962) of 23S rRNA. The protein is Ribosomal RNA large subunit methyltransferase I of Aliivibrio fischeri (strain MJ11) (Vibrio fischeri).